Here is a 323-residue protein sequence, read N- to C-terminus: MAAGGAQGSGGARLLVCFLGVFVCYFYYGILQETITRGTYGEGEKQEKFRFALSLVFVQCIVNALFAKLLIQFFDSGKTDRTQSWLYAACSLSYLGAMVSSNSALQFVNYPTQVLGKSCKPIPVMLLGVTLLRKKYPLSKYLCVLLIVLGVALFMYKPKNTGSGGDEHTFGYGELLLLLSLTLDGLTGVSQDHMRAHFQTGSNHMMLYINLWSSLFLGAGIVFTGELWDFLSFTERYPSIVYNIMLFSLTSALGQTFIFMTVVYFGPLTCSIITTTRKFFTILASVILFSNPISSIQWVGTILVFLGLGLDATYGKGSKKPSH.

The next 8 helical transmembrane spans lie at 15-35 (LVCF…QETI), 51-71 (FALS…KLLI), 85-105 (WLYA…NSAL), 136-156 (YPLS…LFMY), 169-189 (TFGY…LTGV), 205-225 (MMLY…VFTG), 253-273 (LGQT…CSII), and 286-306 (VILF…LVFL). Positions 319-323 (KKPSH) match the Di-lysine motif motif.

It belongs to the nucleotide-sugar transporter family. SLC35B subfamily.

The protein localises to the endoplasmic reticulum membrane. Functionally, probable sugar transporter. The polypeptide is Solute carrier family 35 member B1 (slc35b1) (Xenopus tropicalis (Western clawed frog)).